The primary structure comprises 216 residues: Uracil-DNA glycosylase (216 aa).

The Proton acceptor role is filled by Asp59.

This sequence belongs to the uracil-DNA glycosylase (UDG) superfamily. UNG family.

It localises to the cytoplasm. The enzyme catalyses Hydrolyzes single-stranded DNA or mismatched double-stranded DNA and polynucleotides, releasing free uracil.. Its function is as follows. Excises uracil residues from the DNA which can arise as a result of misincorporation of dUMP residues by DNA polymerase or due to deamination of cytosine. This is Uracil-DNA glycosylase from Staphylococcus epidermidis (strain ATCC 12228 / FDA PCI 1200).